Reading from the N-terminus, the 211-residue chain is Small ribosomal subunit protein uS3 (211 aa).

The 69-residue stretch at 38 to 106 folds into the KH type-2 domain; it reads LRSFVKKTFH…EVELHIVEVK (69 aa).

Belongs to the universal ribosomal protein uS3 family. Part of the 30S ribosomal subunit. Forms a tight complex with proteins S10 and S14.

Functionally, binds the lower part of the 30S subunit head. Binds mRNA in the 70S ribosome, positioning it for translation. This chain is Small ribosomal subunit protein uS3, found in Anaplasma phagocytophilum (strain HZ).